We begin with the raw amino-acid sequence, 915 residues long: Altered inheritance of mitochondria protein 3 (915 aa).

The disordered stretch occupies residues 30-915; it reads VGKSGYNASK…VPAEENRLRK (886 aa). Acidic residues predominate over residues 64–77; the sequence is DEYSGDDSYSDDDS. Residues 103–114 show a composition bias toward polar residues; the sequence is QQVQATSSSHSV. Composition is skewed to low complexity over residues 140–152 and 162–249; these read QQPA…AANQ and QSQM…QQPP. Positions 253–269 are enriched in polar residues; sequence GQPSNQFQLPEPQQRQT. Over residues 283-295 the composition is skewed to low complexity; it reads AQNQAQNQGQFQA. A compositionally biased stretch (polar residues) spans 296 to 373; the sequence is TPLSQLQNMQ…EVNQQNNLMN (78 aa). Over residues 383–404 the composition is skewed to low complexity; it reads QPPMQQQPPMQQQPPMQQQPPM. Pro residues predominate over residues 405–414; the sequence is QQQPPMPPRG. The segment covering 426 to 440 has biased composition (polar residues); that stretch reads PNINANAQLPASSGI. Residues 470 to 482 are compositionally biased toward basic and acidic residues; that stretch reads THRDRGTETRPPS. The segment covering 502–534 has biased composition (polar residues); that stretch reads RASTLDSSSVPVNSIPAHQNQPIYMQDNSSSVE. Over residues 556–566 the composition is skewed to basic and acidic residues; that stretch reads RVTEQNLEKSA. A compositionally biased stretch (low complexity) spans 654–663; it reads SMESSTPSLP. Polar residues predominate over residues 696 to 716; sequence PSHSQVNDSNKESSAPRTHNF. The span at 736–746 shows a compositional bias: basic and acidic residues; that stretch reads LLERKSEIDVK. Over residues 783–793 the composition is skewed to low complexity; the sequence is NQNQNQNQNQN. Residues 831 to 842 show a composition bias toward basic and acidic residues; it reads IPPKFEKIETSR.

It belongs to the AIM3 family.

It localises to the membrane raft. This Vanderwaltozyma polyspora (strain ATCC 22028 / DSM 70294 / BCRC 21397 / CBS 2163 / NBRC 10782 / NRRL Y-8283 / UCD 57-17) (Kluyveromyces polysporus) protein is Altered inheritance of mitochondria protein 3 (AIM3).